The sequence spans 365 residues: Endophilin-B1 (365 aa).

M1 is subject to N-acetylmethionine. The segment at 1 to 30 (MNIMDFNVKKLAADAGTFLSRAVQFTEEKL) is membrane-binding amphipathic helix. Residues 1–37 (MNIMDFNVKKLAADAGTFLSRAVQFTEEKLGQAEKTE) are required for membrane binding. The region spanning 27–261 (EEKLGQAEKT…LGSFPSNYLS (235 aa)) is the BAR domain. T145 carries the post-translational modification Phosphothreonine; by CDK5. The stretch at 155 to 186 (YKTIAKERKLLQNKRLDLDAAKTRLKKAKAAE) forms a coiled coil. The 61-residue stretch at 305 to 365 (SNNRKARVLY…VPITYLELLN (61 aa)) folds into the SH3 domain.

Belongs to the endophilin family. In terms of assembly, homodimer, and heterodimer with SH3GLB2. Binds BAX; induction of apoptosis augments BAX binding. Binds DNM1, HTT, AMPH, BIN1 and ARFGAP1. Interacts with UVRAG; UVRAG bridges the interaction to BECN1 indicative for an association with the PI3K complex II (PI3KC3-C2). Isoform 3 interacts with PPP1CC; this interaction leads to the inhibition of phosphatase activity. Phosphorylated at Thr-145 by CDK5; this phosphorylation is required for autophagy induction in starved neurons and facilitates homodimerization. As to expression, isoform 1 is widely expressed. Isoform 2 is brain-specific. Isoform 3 is predominantly expressed in testis, but it is also detected in liver and, at much lower levels, in skin, stomach and ovary.

It is found in the cytoplasm. It localises to the golgi apparatus membrane. The protein localises to the mitochondrion outer membrane. The protein resides in the cytoplasmic vesicle. Its subcellular location is the autophagosome membrane. It is found in the midbody. May be required for normal outer mitochondrial membrane dynamics. Required for coatomer-mediated retrograde transport in certain cells. May recruit other proteins to membranes with high curvature. May promote membrane fusion. Involved in activation of caspase-dependent apoptosis by promoting BAX/BAK1 activation. Isoform 1 acts proapoptotic in fibroblasts. Involved in caspase-independent apoptosis during nutrition starvation and involved in the regulation of autophagy. Activates lipid kinase activity of PIK3C3 during autophagy probably by associating with the PI3K complex II (PI3KC3-C2). Associated with PI3KC3-C2 during autophagy may regulate the trafficking of ATG9A from the Golgi complex to the peripheral cytoplasm for the formation of autophagosomes by inducing Golgi membrane tubulation and fragmentation. Involved in regulation of degradative endocytic trafficking and cytokinesis, probably in the context of PI3KC3-C2. Isoform 2 acts antiapoptotic in neuronal cells; involved in maintenance of mitochondrial morphology and promotes neuronal viability. This chain is Endophilin-B1 (Sh3glb1), found in Mus musculus (Mouse).